The sequence spans 1871 residues: Plexin-A3 (1871 aa).

Positions 1–19 (MPSVCLLLLLFLAVGGALG) are cleaved as a signal peptide. Positions 20–488 (NRPFRAFVVT…SEKQVSQLPV (469 aa)) constitute a Sema domain. The Extracellular segment spans residues 20-1220 (NRPFRAFVVT…SAERALTLPA (1201 aa)). An N-linked (GlcNAc...) asparagine glycan is attached at Asn59. 9 disulfide bridges follow: Cys77–Cys86, Cys112–Cys120, Cys266–Cys387, Cys282–Cys338, Cys356–Cys375, Cys491–Cys508, Cys497–Cys539, Cys500–Cys517, and Cys511–Cys523. Asn548 carries N-linked (GlcNAc...) asparagine glycosylation. A disulfide bond links Cys574 and Cys594. Residues Asn637, Asn738, and Asn746 are each glycosylated (N-linked (GlcNAc...) asparagine). 4 IPT/TIG domains span residues 840–933 (PRIT…YSFV), 935–1020 (PTFD…YTYT), 1023–1122 (PTVT…FTYY), and 1125–1211 (PSFE…LHIS). N-linked (GlcNAc...) asparagine glycans are attached at residues Asn1009, Asn1036, Asn1073, Asn1115, and Asn1162. Residues 1221 to 1241 (MMGLAAGGGLLLLAITAVLVA) traverse the membrane as a helical segment. Residues 1242–1871 (YKRKTQDADR…QIISLVSSDS (630 aa)) are Cytoplasmic-facing. At Ser1596 the chain carries Phosphoserine.

The protein belongs to the plexin family. Interacts with CBFA2T3/MTG16.

The protein localises to the cell membrane. Coreceptor for SEMA3A and SEMA3F. Necessary for signaling by class 3 semaphorins and subsequent remodeling of the cytoskeleton. Plays a role in axon guidance in the developing nervous system. Regulates the migration of sympathetic neurons, but not of neural crest precursors. Required for normal dendrite spine morphology in pyramidal neurons. May play a role in regulating semaphorin-mediated programmed cell death in the developing nervous system. Class 3 semaphorins bind to a complex composed of a neuropilin and a plexin. The plexin modulates the affinity of the complex for specific semaphorins, and its cytoplasmic domain is required for the activation of down-stream signaling events in the cytoplasm. The protein is Plexin-A3 (PLXNA3) of Homo sapiens (Human).